Consider the following 99-residue polypeptide: Beta-defensin 127 (99 aa).

The N-terminal stretch at 1-20 is a signal peptide; the sequence is MGLFMIIAILLFQKPTVTEQ. 3 disulfides stabilise this stretch: Cys24–Cys53, Cys33–Cys47, and Cys37–Cys54. The propeptide occupies 66–99; that stretch reads ITKPPRPKPATLALTLQDYVTIIENFPSLKTQST.

Belongs to the beta-defensin family.

It is found in the secreted. Functionally, has antibacterial activity. The polypeptide is Beta-defensin 127 (DEFB127) (Homo sapiens (Human)).